Reading from the N-terminus, the 187-residue chain is dCTP deaminase, dUMP-forming (187 aa).

DCTP-binding positions include 101 to 106, Asp-119, 127 to 129, Gln-148, Tyr-162, Lys-170, and Gln-174; these read KSSLGR and TLE. The active-site Proton donor/acceptor is the Glu-129.

Belongs to the dCTP deaminase family. In terms of assembly, homotrimer.

It carries out the reaction dCTP + 2 H2O = dUMP + NH4(+) + diphosphate. It functions in the pathway pyrimidine metabolism; dUMP biosynthesis; dUMP from dCTP: step 1/1. Bifunctional enzyme that catalyzes both the deamination of dCTP to dUTP and the hydrolysis of dUTP to dUMP without releasing the toxic dUTP intermediate. This Corynebacterium diphtheriae (strain ATCC 700971 / NCTC 13129 / Biotype gravis) protein is dCTP deaminase, dUMP-forming.